Consider the following 73-residue polypeptide: YFSYNDKIIKILEAEYLNADHHFTSGTVISDKLEIACGSGILRVKKLQQESKKALNIEEFLCGTNILKDTVLK.

The protein belongs to the Fmt family.

The catalysed reaction is L-methionyl-tRNA(fMet) + (6R)-10-formyltetrahydrofolate = N-formyl-L-methionyl-tRNA(fMet) + (6S)-5,6,7,8-tetrahydrofolate + H(+). Attaches a formyl group to the free amino group of methionyl-tRNA(fMet). The formyl group appears to play a dual role in the initiator identity of N-formylmethionyl-tRNA by promoting its recognition by IF2 and preventing the misappropriation of this tRNA by the elongation apparatus. The polypeptide is Methionyl-tRNA formyltransferase (fmt) (Rickettsia rhipicephali).